Here is a 262-residue protein sequence, read N- to C-terminus: MSLIHPTAIVDPKAQLDSSVEVGPYTVIGPDVVIGAGSKIGPHVVVEGHTTIGADNKIFQFASIGAAPQDKKYAGEPTLLTIGDRNTIREFVTINLGTSQDVGITRLGNDNWIMAYVHIAHDCQLGSNIILANNATLAGHVHLEDWVFLGGFTSVHQFCRIGAHAMTAFTAAVSQDIPPFVTAAGNRAVPAGINSEGLKRRGFSSEQIMAIKRGYKTIYRSGLPLEEAKLALQAEEEKSPDAAQYLRQLREFIEASPRGIIR.

Belongs to the transferase hexapeptide repeat family. LpxA subfamily. In terms of assembly, homotrimer.

It localises to the cytoplasm. It carries out the reaction a (3R)-hydroxyacyl-[ACP] + UDP-N-acetyl-alpha-D-glucosamine = a UDP-3-O-[(3R)-3-hydroxyacyl]-N-acetyl-alpha-D-glucosamine + holo-[ACP]. Its pathway is glycolipid biosynthesis; lipid IV(A) biosynthesis; lipid IV(A) from (3R)-3-hydroxytetradecanoyl-[acyl-carrier-protein] and UDP-N-acetyl-alpha-D-glucosamine: step 1/6. Functionally, involved in the biosynthesis of lipid A, a phosphorylated glycolipid that anchors the lipopolysaccharide to the outer membrane of the cell. The polypeptide is Acyl-[acyl-carrier-protein]--UDP-N-acetylglucosamine O-acyltransferase (Janthinobacterium sp. (strain Marseille) (Minibacterium massiliensis)).